Consider the following 420-residue polypeptide: Zinc finger protein Pegasus (420 aa).

A Glycyl lysine isopeptide (Lys-Gly) (interchain with G-Cter in SUMO2) cross-link involves residue Lys-5. 3 C2H2-type zinc fingers span residues 82 to 104, 110 to 132, and 138 to 161; these read LKCRYCNYASKGTARLIEHIRIH, HRCHLCPFASAYERHLEAHMRSH, and YKCELCSFRCSDRSNLSHHRRRKH. Lys-185 is covalently cross-linked (Glycyl lysine isopeptide (Lys-Gly) (interchain with G-Cter in SUMO2)). Polar residues-rich tracts occupy residues 223–236 and 262–273; these read QTDSYESMAKTTPT and LSSLPPENQNPA. 2 disordered regions span residues 223–247 and 262–356; these read QTDSYESMAKTTPTGGLPRDPQELM and LSSL…PALP. The span at 290–311 shows a compositional bias: low complexity; that stretch reads QPSTQAVVSAVSASIPQSSSPT. A compositionally biased stretch (polar residues) spans 332–349; it reads SEPSAHTSTPSIGNSQPS. The segment at 364-387 adopts a C2H2-type 4; degenerate zinc-finger fold; the sequence is HHCQHCDMYFFADNILYTIHMGCH. Residues 393–417 form a C2H2-type 5 zinc finger; sequence FQCNICGCKCKNKYDFACHFARGQH.

It belongs to the Ikaros C2H2-type zinc-finger protein family. As to quaternary structure, self-associates. Interacts with other family members; IKZF1, IKZF2, IKZF3 and IKZF4.

Its subcellular location is the nucleus. Functionally, transcriptional repressor that binds the core 5'GNNTGTNG-3' DNA consensus sequence. Involved in megakaryocyte differentiation. This Pongo abelii (Sumatran orangutan) protein is Zinc finger protein Pegasus (IKZF5).